Reading from the N-terminus, the 122-residue chain is Large ribosomal subunit protein uL14 (122 aa).

The protein belongs to the universal ribosomal protein uL14 family. As to quaternary structure, part of the 50S ribosomal subunit. Forms a cluster with proteins L3 and L19. In the 70S ribosome, L14 and L19 interact and together make contacts with the 16S rRNA in bridges B5 and B8.

Binds to 23S rRNA. Forms part of two intersubunit bridges in the 70S ribosome. The protein is Large ribosomal subunit protein uL14 of Thermotoga petrophila (strain ATCC BAA-488 / DSM 13995 / JCM 10881 / RKU-1).